The primary structure comprises 314 residues: Mitochondrial translation factor 2 (314 aa).

The segment at E111–I136 is disordered.

In terms of assembly, component of the MRH5C complex, composed of mrh5, ppr4, mtf2, and sls1. Proteins mtf2 and sls1 form a subcomplex that serves as a scaffold to bring mrh5 and ppr4 together. The MRH5C complex associates with the small subunit of the mitochondrial ribosome.

In terms of biological role, translation activation factor that as part of the MRH5C complex specifically recruits cox1 mRNA to the mitochondrial ribosome for translation initiation. The sequence is that of Mitochondrial translation factor 2 from Schizosaccharomyces pombe (strain 972 / ATCC 24843) (Fission yeast).